Reading from the N-terminus, the 426-residue chain is 3-phosphoshikimate 1-carboxyvinyltransferase (426 aa).

3 residues coordinate 3-phosphoshikimate: Lys-22, Ser-23, and Arg-27. Lys-22 lines the phosphoenolpyruvate pocket. Residues Gly-96 and Arg-124 each contribute to the phosphoenolpyruvate site. 3-phosphoshikimate is bound by residues Ser-170, Ser-171, Gln-172, Ser-198, Asp-314, Asn-337, and Lys-341. Gln-172 is a binding site for phosphoenolpyruvate. The Proton acceptor role is filled by Asp-314. Residues Arg-345, Arg-387, and Lys-412 each contribute to the phosphoenolpyruvate site.

The protein belongs to the EPSP synthase family. As to quaternary structure, monomer.

It is found in the cytoplasm. The catalysed reaction is 3-phosphoshikimate + phosphoenolpyruvate = 5-O-(1-carboxyvinyl)-3-phosphoshikimate + phosphate. Its pathway is metabolic intermediate biosynthesis; chorismate biosynthesis; chorismate from D-erythrose 4-phosphate and phosphoenolpyruvate: step 6/7. Functionally, catalyzes the transfer of the enolpyruvyl moiety of phosphoenolpyruvate (PEP) to the 5-hydroxyl of shikimate-3-phosphate (S3P) to produce enolpyruvyl shikimate-3-phosphate and inorganic phosphate. This chain is 3-phosphoshikimate 1-carboxyvinyltransferase, found in Aliivibrio fischeri (strain ATCC 700601 / ES114) (Vibrio fischeri).